A 375-amino-acid polypeptide reads, in one-letter code: Protein arginine N-methyltransferase 6 (375 aa).

The segment at 1–38 is disordered; sequence MSQPKKRKLESGGGGEGGEGTEEEDGAEREAALERPRR. The residue at position 21 (Thr-21) is a Phosphothreonine. Residues 28 to 38 show a composition bias toward basic and acidic residues; that stretch reads EREAALERPRR. 3 positions are modified to asymmetric dimethylarginine; by autocatalysis: Arg-29, Arg-35, and Arg-37. Positions 44 to 374 constitute an SAM-dependent MTase PRMT-type domain; the sequence is DQLYYECYSD…EEKTKDFAME (331 aa). The S-adenosyl-L-methionine site is built by His-57, Arg-66, Gly-90, Glu-112, and Glu-141. Catalysis depends on residues Glu-155 and Glu-164.

Belongs to the class I-like SAM-binding methyltransferase superfamily. Protein arginine N-methyltransferase family. PRMT6 subfamily. Interacts with EPB41L3 and NCOA1. As to quaternary structure, (Microbial infection) Interacts with (and methylates) HIV-1 Tat, Rev and Nucleocapsid protein p7 (NC). In terms of assembly, (Microbial infection) Interacts with human cytomegalovirus protein UL69. Automethylation enhances its stability and antiretroviral activity. In terms of tissue distribution, highly expressed in kidney and testis.

It is found in the nucleus. It catalyses the reaction L-arginyl-[protein] + 2 S-adenosyl-L-methionine = N(omega),N(omega)-dimethyl-L-arginyl-[protein] + 2 S-adenosyl-L-homocysteine + 2 H(+). In terms of biological role, arginine methyltransferase that can catalyze the formation of both omega-N monomethylarginine (MMA) and asymmetrical dimethylarginine (aDMA), with a strong preference for the formation of aDMA. Preferentially methylates arginyl residues present in a glycine and arginine-rich domain and displays preference for monomethylated substrates. Specifically mediates the asymmetric dimethylation of histone H3 'Arg-2' to form H3R2me2a. H3R2me2a represents a specific tag for epigenetic transcriptional repression and is mutually exclusive with methylation on histone H3 'Lys-4' (H3K4me2 and H3K4me3). Acts as a transcriptional repressor of various genes such as HOXA2, THBS1 and TP53. Repression of TP53 blocks cellular senescence. Also methylates histone H2A and H4 'Arg-3' (H2AR3me and H4R3me, respectively). Acts as a regulator of DNA base excision during DNA repair by mediating the methylation of DNA polymerase beta (POLB), leading to the stimulation of its polymerase activity by enhancing DNA binding and processivity. Methylates HMGA1. Regulates alternative splicing events. Acts as a transcriptional coactivator of a number of steroid hormone receptors including ESR1, ESR2, PGR and NR3C1. Promotes fasting-induced transcriptional activation of the gluconeogenic program through methylation of the CRTC2 transcription coactivator. May play a role in innate immunity against HIV-1 in case of infection by methylating and impairing the function of various HIV-1 proteins such as Tat, Rev and Nucleocapsid protein p7 (NC). Methylates GPS2, protecting GPS2 from ubiquitination and degradation. Methylates SIRT7, inhibiting SIRT7 histone deacetylase activity and promoting mitochondria biogenesis. The sequence is that of Protein arginine N-methyltransferase 6 (PRMT6) from Homo sapiens (Human).